The following is a 75-amino-acid chain: Endogenous retrovirus group K member 7 Np9 protein (75 aa).

The tract at residues 24–43 is disordered; the sequence is PKRQRPSRTGHDDDGGFVEK. Positions 32 to 43 are enriched in basic and acidic residues; the sequence is TGHDDDGGFVEK.

Its subcellular location is the nucleus. May possess a function in tumorigenesis. This Homo sapiens (Human) protein is Endogenous retrovirus group K member 7 Np9 protein (ERVK-7).